A 382-amino-acid chain; its full sequence is Dual-specificity RNA methyltransferase RlmN (382 aa).

Catalysis depends on glutamate 95, which acts as the Proton acceptor. In terms of domain architecture, Radical SAM core spans 101–347 (EDDRGTLCIS…TTVRKTRGDD (247 aa)). Cysteines 108 and 352 form a disulfide. [4Fe-4S] cluster is bound by residues cysteine 115, cysteine 119, and cysteine 122. S-adenosyl-L-methionine contacts are provided by residues 178–179 (GE), serine 210, 232–234 (SLH), and asparagine 309. Cysteine 352 (S-methylcysteine intermediate) is an active-site residue.

This sequence belongs to the radical SAM superfamily. RlmN family. It depends on [4Fe-4S] cluster as a cofactor.

It is found in the cytoplasm. The catalysed reaction is adenosine(2503) in 23S rRNA + 2 reduced [2Fe-2S]-[ferredoxin] + 2 S-adenosyl-L-methionine = 2-methyladenosine(2503) in 23S rRNA + 5'-deoxyadenosine + L-methionine + 2 oxidized [2Fe-2S]-[ferredoxin] + S-adenosyl-L-homocysteine. It carries out the reaction adenosine(37) in tRNA + 2 reduced [2Fe-2S]-[ferredoxin] + 2 S-adenosyl-L-methionine = 2-methyladenosine(37) in tRNA + 5'-deoxyadenosine + L-methionine + 2 oxidized [2Fe-2S]-[ferredoxin] + S-adenosyl-L-homocysteine. Specifically methylates position 2 of adenine 2503 in 23S rRNA and position 2 of adenine 37 in tRNAs. m2A2503 modification seems to play a crucial role in the proofreading step occurring at the peptidyl transferase center and thus would serve to optimize ribosomal fidelity. The polypeptide is Dual-specificity RNA methyltransferase RlmN (Bordetella avium (strain 197N)).